An 872-amino-acid chain; its full sequence is Adhesive plaque matrix protein (872 aa).

Positions methionine 1–alanine 20 are cleaved as a signal peptide. A nonrepetitive linker region spans residues leucine 21 to alanine 41. A run of 69 repeats spans residues tyrosine 124–serine 133, tyrosine 134–threonine 143, tyrosine 144–threonine 153, tyrosine 154–serine 163, tyrosine 174–threonine 183, tyrosine 184–proline 192, tyrosine 193–threonine 202, tyrosine 203–threonine 212, tyrosine 213–proline 221, tyrosine 222–threonine 231, tyrosine 232–isoleucine 241, tyrosine 242–serine 251, tyrosine 252–threonine 261, tyrosine 262–threonine 271, tyrosine 272–threonine 281, tyrosine 282–threonine 291, tyrosine 292–threonine 301, tyrosine 302–threonine 311, tyrosine 312–proline 321, tyrosine 322–isoleucine 331, tyrosine 332–serine 341, tyrosine 342–threonine 351, tyrosine 352–threonine 361, tyrosine 362–serine 371, tyrosine 372–threonine 381, tyrosine 382–threonine 391, tyrosine 402–threonine 411, tyrosine 412–threonine 421, tyrosine 422–serine 431, tyrosine 432–threonine 441, tyrosine 442–threonine 451, tyrosine 452–threonine 461, tyrosine 462–threonine 471, tyrosine 472–threonine 481, tyrosine 482–threonine 491, tyrosine 502–isoleucine 511, tyrosine 512–serine 521, tyrosine 522–threonine 531, tyrosine 532–threonine 541, tyrosine 542–serine 551, tyrosine 552–threonine 561, tyrosine 562–threonine 571, tyrosine 572–threonine 581, tyrosine 582–threonine 591, tyrosine 602–isoleucine 611, tyrosine 612–alanine 621, tyrosine 622–threonine 631, tyrosine 632–threonine 641, tyrosine 642–serine 651, tyrosine 652–threonine 661, tyrosine 662–alanine 671, tyrosine 672–serine 681, tyrosine 682–serine 691, tyrosine 702–threonine 711, tyrosine 712–serine 721, tyrosine 722–threonine 731, tyrosine 732–threonine 741, tyrosine 742–threonine 751, tyrosine 752–serine 761, tyrosine 762–threonine 771, tyrosine 772–serine 781, tyrosine 782–threonine 791, tyrosine 792–serine 801, tyrosine 812–serine 821, tyrosine 822–threonine 831, tyrosine 832–threonine 841, tyrosine 842–threonine 851, tyrosine 852–alanine 861, and tyrosine 862–glutamine 871. Positions tyrosine 124–glutamine 871 are 69 X 10 AA tandem repeats of Y-[KRQ]-[PSTAHQR]-K-[AIPTSKGV]-[STR]-Y-[PTSVA]-[PSTQA]-[STYIPAQ]. Positions tyrosine 184–proline 192 are nonapeptide 1. Positions tyrosine 213 to proline 221 are nonapeptide 2. 2 stretches are compositionally biased toward pro residues: residues lysine 273–tyrosine 282 and threonine 291–tyrosine 302. Residues lysine 273–serine 781 are disordered. Residues threonine 320–proline 360 show a composition bias toward low complexity. The segment covering threonine 361–tyrosine 372 has biased composition (pro residues). The segment covering threonine 377–proline 390 has biased composition (low complexity). A compositionally biased stretch (pro residues) spans threonine 391–tyrosine 402. Residues lysine 403 to proline 450 are compositionally biased toward low complexity. 2 stretches are compositionally biased toward pro residues: residues threonine 451 to tyrosine 462 and threonine 471 to tyrosine 482. Positions proline 501–proline 540 are enriched in low complexity. A compositionally biased stretch (pro residues) spans threonine 541–tyrosine 552. Low complexity-rich tracts occupy residues tyrosine 568–proline 590 and threonine 600–proline 640. Pro residues predominate over residues threonine 641–tyrosine 652. Low complexity-rich tracts occupy residues serine 677–proline 690 and tyrosine 698–proline 719. A compositionally biased stretch (low complexity) spans proline 754–lysine 763.

Post-translationally, hydroxylated on proline (mono- or dihydroxylation) and tyrosine residues (to L-DOPA = 3',4'-dihydroxyphenylalanine) of the tandem repeats. In terms of tissue distribution, produced by the byssal gland.

The protein localises to the secreted. Its function is as follows. Provides adhesiveness to the mussel's foot. Mussels produce one of the strongest water insoluble glues. The mussel's adhesive is a bundle of threads, called a byssus, formed by a fibrous collagenous core coated with adhesive proteins. The chain is Adhesive plaque matrix protein (FP1) from Mytilus coruscus (Sea mussel).